Reading from the N-terminus, the 97-residue chain is UPF0235 protein Daro_3887 (97 aa).

Belongs to the UPF0235 family.

The protein is UPF0235 protein Daro_3887 of Dechloromonas aromatica (strain RCB).